The following is a 436-amino-acid chain: Xaa-Arg dipeptidase (436 aa).

It belongs to the peptidase M20A family.

The catalysed reaction is beta-alanyl-L-lysine + H2O = beta-alanine + L-lysine. It catalyses the reaction beta-alanyl-L-ornithine + H2O = beta-alanine + L-ornithine. The enzyme catalyses N(2)-(4-aminobutanoyl)-L-lysine + H2O = 4-aminobutanoate + L-lysine. It carries out the reaction N(2)-(4-aminobutanoyl)-L-ornithine + H2O = 4-aminobutanoate + L-ornithine. The catalysed reaction is N(2)-(4-aminobutanoyl)-L-arginine + H2O = 4-aminobutanoate + L-arginine. Catalyzes the peptide bond hydrolysis in dipeptides having basic amino acids lysine, ornithine or arginine at C-terminus. Postulated to function in a metabolite repair mechanism by eliminating alternate dipeptide by-products formed during carnosine synthesis. This is Xaa-Arg dipeptidase from Homo sapiens (Human).